Consider the following 380-residue polypeptide: Glucose-1-phosphate adenylyltransferase (380 aa).

Alpha-D-glucose 1-phosphate-binding positions include G164, 179–180, and S190; that span reads EK.

Belongs to the bacterial/plant glucose-1-phosphate adenylyltransferase family. As to quaternary structure, homotetramer.

It carries out the reaction alpha-D-glucose 1-phosphate + ATP + H(+) = ADP-alpha-D-glucose + diphosphate. It functions in the pathway glycan biosynthesis; glycogen biosynthesis. Involved in the biosynthesis of ADP-glucose, a building block required for the elongation reactions to produce glycogen. Catalyzes the reaction between ATP and alpha-D-glucose 1-phosphate (G1P) to produce pyrophosphate and ADP-Glc. The polypeptide is Glucose-1-phosphate adenylyltransferase (Lactococcus lactis subsp. lactis (strain IL1403) (Streptococcus lactis)).